Reading from the N-terminus, the 358-residue chain is Heme A synthase (358 aa).

8 helical membrane-spanning segments follow: residues 22–42 (IQVW…VGGA), 107–127 (VLGR…WAIK), 133–153 (VLLQ…VGWW), 172–192 (LAFH…LSQG), 208–228 (FAGW…LVAG), 269–289 (FVHR…AFYV), 302–322 (AFFI…TLLQ), and 324–344 (VPIS…CFSV). His271 is a binding site for heme. His332 contributes to the heme binding site.

The protein belongs to the COX15/CtaA family. Type 2 subfamily. Interacts with CtaB. Heme b is required as a cofactor.

Its subcellular location is the cell membrane. It carries out the reaction Fe(II)-heme o + 2 A + H2O = Fe(II)-heme a + 2 AH2. It functions in the pathway porphyrin-containing compound metabolism; heme A biosynthesis; heme A from heme O: step 1/1. In terms of biological role, catalyzes the conversion of heme O to heme A by two successive hydroxylations of the methyl group at C8. The first hydroxylation forms heme I, the second hydroxylation results in an unstable dihydroxymethyl group, which spontaneously dehydrates, resulting in the formyl group of heme A. This chain is Heme A synthase, found in Bartonella henselae (strain ATCC 49882 / DSM 28221 / CCUG 30454 / Houston 1) (Rochalimaea henselae).